Here is a 657-residue protein sequence, read N- to C-terminus: Threonine--tRNA ligase (657 aa).

A TGS domain is found at 1–62; that stretch reads MALDITFPDG…AHSGQLQIMT (62 aa). The tract at residues 240 to 538 is catalytic; the sequence is DHRVIGRDLD…LTEIYKGAFP (299 aa). Zn(2+) is bound by residues Cys334, His385, and His515.

This sequence belongs to the class-II aminoacyl-tRNA synthetase family. As to quaternary structure, homodimer. Zn(2+) serves as cofactor.

The protein localises to the cytoplasm. The catalysed reaction is tRNA(Thr) + L-threonine + ATP = L-threonyl-tRNA(Thr) + AMP + diphosphate + H(+). Its function is as follows. Catalyzes the attachment of threonine to tRNA(Thr) in a two-step reaction: L-threonine is first activated by ATP to form Thr-AMP and then transferred to the acceptor end of tRNA(Thr). Also edits incorrectly charged L-seryl-tRNA(Thr). This chain is Threonine--tRNA ligase, found in Lacticaseibacillus paracasei (strain ATCC 334 / BCRC 17002 / CCUG 31169 / CIP 107868 / KCTC 3260 / NRRL B-441) (Lactobacillus paracasei).